The primary structure comprises 371 residues: Putative glutamate--cysteine ligase 2 (371 aa).

Belongs to the glutamate--cysteine ligase type 2 family. YbdK subfamily. In terms of assembly, homodimer.

The catalysed reaction is L-cysteine + L-glutamate + ATP = gamma-L-glutamyl-L-cysteine + ADP + phosphate + H(+). ATP-dependent carboxylate-amine ligase which exhibits weak glutamate--cysteine ligase activity. The polypeptide is Putative glutamate--cysteine ligase 2 (Cronobacter sakazakii (strain ATCC BAA-894) (Enterobacter sakazakii)).